The following is a 364-amino-acid chain: GTPase Obg (364 aa).

The 159-residue stretch at 1–159 (MKFIDEARIE…RNLRLELKVL (159 aa)) folds into the Obg domain. The disordered stretch occupies residues 128 to 147 (IHFKSSTNRAPRQKTDGKAG). Residues 160-334 (ADVGLLGMPN…LVHAIQEYLD (175 aa)) form the OBG-type G domain. Residues 166 to 173 (GMPNAGKS), 191 to 195 (FTTLH), 213 to 216 (DIPG), 284 to 287 (NKLD), and 315 to 317 (SAL) contribute to the GTP site. The Mg(2+) site is built by Ser173 and Thr193. The segment at 340 to 364 (EDAAAAAPDQRLDPTLHNVDHDDQA) is disordered. Over residues 349-364 (QRLDPTLHNVDHDDQA) the composition is skewed to basic and acidic residues.

Belongs to the TRAFAC class OBG-HflX-like GTPase superfamily. OBG GTPase family. Monomer. Requires Mg(2+) as cofactor.

The protein localises to the cytoplasm. In terms of biological role, an essential GTPase which binds GTP, GDP and possibly (p)ppGpp with moderate affinity, with high nucleotide exchange rates and a fairly low GTP hydrolysis rate. Plays a role in control of the cell cycle, stress response, ribosome biogenesis and in those bacteria that undergo differentiation, in morphogenesis control. The polypeptide is GTPase Obg (Ralstonia pickettii (strain 12J)).